The sequence spans 633 residues: Threonine--tRNA ligase (633 aa).

Residues 1-61 (MPAIRLPDGS…DHDVDLAIVT (61 aa)) form the TGS domain. Residues 242 to 533 (DHRKLGRQLD…LIEHHAGAMP (292 aa)) are catalytic. 3 residues coordinate Zn(2+): cysteine 333, histidine 384, and histidine 510.

This sequence belongs to the class-II aminoacyl-tRNA synthetase family. In terms of assembly, homodimer. Zn(2+) is required as a cofactor.

The protein localises to the cytoplasm. It carries out the reaction tRNA(Thr) + L-threonine + ATP = L-threonyl-tRNA(Thr) + AMP + diphosphate + H(+). Functionally, catalyzes the attachment of threonine to tRNA(Thr) in a two-step reaction: L-threonine is first activated by ATP to form Thr-AMP and then transferred to the acceptor end of tRNA(Thr). Also edits incorrectly charged L-seryl-tRNA(Thr). This Laribacter hongkongensis (strain HLHK9) protein is Threonine--tRNA ligase.